Here is a 306-residue protein sequence, read N- to C-terminus: tRNA dimethylallyltransferase 2 (306 aa).

19 to 26 is a binding site for ATP; the sequence is GATASGKT. 21 to 26 contacts substrate; sequence TASGKT. Residues 44-47 are interaction with substrate tRNA; it reads DSRQ.

The protein belongs to the IPP transferase family. As to quaternary structure, monomer. Mg(2+) is required as a cofactor.

It carries out the reaction adenosine(37) in tRNA + dimethylallyl diphosphate = N(6)-dimethylallyladenosine(37) in tRNA + diphosphate. Functionally, catalyzes the transfer of a dimethylallyl group onto the adenine at position 37 in tRNAs that read codons beginning with uridine, leading to the formation of N6-(dimethylallyl)adenosine (i(6)A). This Citrifermentans bemidjiense (strain ATCC BAA-1014 / DSM 16622 / JCM 12645 / Bem) (Geobacter bemidjiensis) protein is tRNA dimethylallyltransferase 2.